A 199-amino-acid chain; its full sequence is dITP/XTP pyrophosphatase (199 aa).

7–12 is a binding site for substrate; that stretch reads TTNLHK. Positions 41 and 70 each coordinate Mg(2+). D70 serves as the catalytic Proton acceptor. Residues S71, 154–157, K177, and 182–183 contribute to the substrate site; these read FGYD and HR.

Belongs to the HAM1 NTPase family. In terms of assembly, homodimer. Mg(2+) serves as cofactor.

The enzyme catalyses XTP + H2O = XMP + diphosphate + H(+). The catalysed reaction is dITP + H2O = dIMP + diphosphate + H(+). It carries out the reaction ITP + H2O = IMP + diphosphate + H(+). In terms of biological role, pyrophosphatase that catalyzes the hydrolysis of nucleoside triphosphates to their monophosphate derivatives, with a high preference for the non-canonical purine nucleotides XTP (xanthosine triphosphate), dITP (deoxyinosine triphosphate) and ITP. Seems to function as a house-cleaning enzyme that removes non-canonical purine nucleotides from the nucleotide pool, thus preventing their incorporation into DNA/RNA and avoiding chromosomal lesions. This chain is dITP/XTP pyrophosphatase, found in Protochlamydia amoebophila (strain UWE25).